A 28-amino-acid chain; its full sequence is Dolichyl-diphosphooligosaccharide--protein glycosyltransferase subunit 1 (28 aa).

The protein belongs to the OST1 family. As to quaternary structure, component of the oligosaccharyltransferase (OST) complex.

It localises to the endoplasmic reticulum membrane. Its pathway is protein modification; protein glycosylation. Its function is as follows. Subunit of the oligosaccharyl transferase (OST) complex that catalyzes the initial transfer of a defined glycan (Glc(3)Man(9)GlcNAc(2) in eukaryotes) from the lipid carrier dolichol-pyrophosphate to an asparagine residue within an Asn-X-Ser/Thr consensus motif in nascent polypeptide chains, the first step in protein N-glycosylation. N-glycosylation occurs cotranslationally and the complex associates with the Sec61 complex at the channel-forming translocon complex that mediates protein translocation across the endoplasmic reticulum (ER). All subunits are required for a maximal enzyme activity. In Gallus gallus (Chicken), this protein is Dolichyl-diphosphooligosaccharide--protein glycosyltransferase subunit 1.